Here is a 149-residue protein sequence, read N- to C-terminus: Aquaporin-like protein 2 (149 aa).

The disordered stretch occupies residues 1 to 35; that stretch reads MSNESNDLEKNISHLDPTGVDNAYIPPEQPETKHS. The Cytoplasmic portion of the chain corresponds to 1 to 47; it reads MSNESNDLEKNISHLDPTGVDNAYIPPEQPETKHSRFNIDRDTLRNH. The helical transmembrane segment at 48-68 threads the bilayer; that stretch reads FIAAVGEFCGTFMFLWCAYVI. The Extracellular segment spans residues 69–89; that stretch reads CNVANHDVALTTEPEGSHPGQ. A helical transmembrane segment spans residues 90 to 110; it reads LIMIALGFGFSVMFSIWCFWW. The Cytoplasmic portion of the chain corresponds to 111–149; it reads GFEPSRFSLFVFGQSHLTSQMCSDVVSSDHCWDGCWWCR.

It belongs to the MIP/aquaporin (TC 1.A.8) family.

The protein resides in the endoplasmic reticulum membrane. The protein localises to the cell membrane. Functionally, water channel required to facilitate the transport of water across membranes. Involved in freeze tolerance, osmotolerance and cell flocculation in liquid cultures. Is non-functional in most laboratory strains. This Saccharomyces cerevisiae (strain JAY291) (Baker's yeast) protein is Aquaporin-like protein 2 (AQY2-2).